A 388-amino-acid polypeptide reads, in one-letter code: Queuine tRNA-ribosyltransferase (388 aa).

Asp-91 serves as the catalytic Proton acceptor. Residues Asp-91–Tyr-95, Asp-145, Gln-190, and Gly-217 contribute to the substrate site. An RNA binding region spans residues Gly-248–Asp-254. Asp-267 (nucleophile) is an active-site residue. Residues Thr-272–Arg-276 are RNA binding; important for wobble base 34 recognition. Cys-305, Cys-307, Cys-310, and His-336 together coordinate Zn(2+).

This sequence belongs to the queuine tRNA-ribosyltransferase family. Homodimer. Within each dimer, one monomer is responsible for RNA recognition and catalysis, while the other monomer binds to the replacement base PreQ1. Requires Zn(2+) as cofactor.

It catalyses the reaction 7-aminomethyl-7-carbaguanine + guanosine(34) in tRNA = 7-aminomethyl-7-carbaguanosine(34) in tRNA + guanine. The protein operates within tRNA modification; tRNA-queuosine biosynthesis. In terms of biological role, catalyzes the base-exchange of a guanine (G) residue with the queuine precursor 7-aminomethyl-7-deazaguanine (PreQ1) at position 34 (anticodon wobble position) in tRNAs with GU(N) anticodons (tRNA-Asp, -Asn, -His and -Tyr). Catalysis occurs through a double-displacement mechanism. The nucleophile active site attacks the C1' of nucleotide 34 to detach the guanine base from the RNA, forming a covalent enzyme-RNA intermediate. The proton acceptor active site deprotonates the incoming PreQ1, allowing a nucleophilic attack on the C1' of the ribose to form the product. After dissociation, two additional enzymatic reactions on the tRNA convert PreQ1 to queuine (Q), resulting in the hypermodified nucleoside queuosine (7-(((4,5-cis-dihydroxy-2-cyclopenten-1-yl)amino)methyl)-7-deazaguanosine). This chain is Queuine tRNA-ribosyltransferase, found in Dictyoglomus turgidum (strain DSM 6724 / Z-1310).